The primary structure comprises 479 residues: Glutamate--tRNA ligase (479 aa).

Positions 9–19 match the 'HIGH' region motif; sequence PSPTGNLHIGT. Positions 243–247 match the 'KMSKS' region motif; the sequence is KLSKR. Lys-246 contacts ATP.

This sequence belongs to the class-I aminoacyl-tRNA synthetase family. Glutamate--tRNA ligase type 1 subfamily. In terms of assembly, monomer.

The protein localises to the cytoplasm. The catalysed reaction is tRNA(Glu) + L-glutamate + ATP = L-glutamyl-tRNA(Glu) + AMP + diphosphate. Catalyzes the attachment of glutamate to tRNA(Glu) in a two-step reaction: glutamate is first activated by ATP to form Glu-AMP and then transferred to the acceptor end of tRNA(Glu). This is Glutamate--tRNA ligase from Synechococcus sp. (strain JA-3-3Ab) (Cyanobacteria bacterium Yellowstone A-Prime).